A 362-amino-acid chain; its full sequence is MLVPPANFGIAEEGIYRCSKVETLNLSFLETLNLKTAIFIGGQEPSKFFKDFFTRSSIKWIVLRMSDFSAAAVPVKSSSVSNANLYSNNNSTLSLQEEKKKSTANGSQNSTTGDPVIQEELAYHLTDNDDLMLIKSTCLKRTFKTLLNVDNYNVLLVDKTALVIGILRKIQKWNIASIINEYRLFSGKNRNYFAETFLEIINIEIEQEKDNKTIVDNKAKKLPLENNRTHSIEYKANSGKLIRVNEDDLCREPEVPQRLLTLINQIETKVKNNKVLQVSGVLGDDLKKTSSDLGIFGHRYRLAFNKKENGDYGYYKARGKDNVKIRIPCDSELPDWFRFQRDLWEKENVPEEHHFYREHIFT.

Required for replication of Brome mosaic virus (BMV). The polypeptide is Protein OCA4 (OCA4) (Saccharomyces cerevisiae (strain ATCC 204508 / S288c) (Baker's yeast)).